Here is a 287-residue protein sequence, read N- to C-terminus: uncharacterized protein (287 aa).

Residues 183 to 281 (WEAARYLQEH…GISPIEYRKI (99 aa)) enclose the HTH araC/xylS-type domain. 2 consecutive DNA-binding regions (H-T-H motif) follow at residues 200-221 (KDLS…QQVL) and 248-271 (MGVI…KQIE).

This is an uncharacterized protein from Bacillus subtilis (strain 168).